The following is a 395-amino-acid chain: Probable G-protein coupled receptor npr-29 (395 aa).

The next 4 helical transmembrane spans lie at 38 to 58, 66 to 86, 89 to 109, and 148 to 168; these read VVGFVINAWVLYVVAPLLFAP, ILFYIFALCVGDLMTMIAMLL, IELVFGTWQFSSMVCTSYLIF, and AIIQFCIAFAFVMILLWPVFA. N-linked (GlcNAc...) asparagine glycosylation occurs at Asn-180. Helical transmembrane passes span 202–222, 252–272, and 287–307; these read FWFNLIACITSYAVPLFGIIY, VITTVLLLTVIYVLCWTPYWV, and IIIISYFIHLLPYISCVAYPL.

Belongs to the G-protein coupled receptor 1 family.

The protein localises to the cell membrane. In terms of biological role, not known. Putative receptor. The protein is Probable G-protein coupled receptor npr-29 of Caenorhabditis elegans.